We begin with the raw amino-acid sequence, 536 residues long: Chaperonin GroEL (536 aa).

ATP-binding positions include 30–33, 86–90, glycine 414, and aspartate 494; these read TLGP and DGTTT.

The protein belongs to the chaperonin (HSP60) family. In terms of assembly, forms a cylinder of 14 subunits composed of two heptameric rings stacked back-to-back. Interacts with the co-chaperonin GroES.

The protein localises to the cytoplasm. The catalysed reaction is ATP + H2O + a folded polypeptide = ADP + phosphate + an unfolded polypeptide.. In terms of biological role, together with its co-chaperonin GroES, plays an essential role in assisting protein folding. The GroEL-GroES system forms a nano-cage that allows encapsulation of the non-native substrate proteins and provides a physical environment optimized to promote and accelerate protein folding. The polypeptide is Chaperonin GroEL (Methanospirillum hungatei JF-1 (strain ATCC 27890 / DSM 864 / NBRC 100397 / JF-1)).